The chain runs to 537 residues: Tyrosine-protein kinase fyna (537 aa).

Gly-2 is lipidated: N-myristoyl glycine. Residues Cys-3 and Cys-6 are each lipidated (S-palmitoyl cysteine). Position 12 is a phosphothreonine; by PKC (Thr-12). Positions 13–34 (KLTDERETSVSQHAGYRYGSDP) are disordered. The SH3 domain occupies 82–143 (TGVTLFVALY…PSNYVAPVDS (62 aa)). One can recognise an SH2 domain in the interval 149 to 246 (WYFGKLGRKD…GLCCRLIVPC (98 aa)). The region spanning 271–524 (LQLIKRLGNG…YLQAFLEDYF (254 aa)) is the Protein kinase domain. ATP is bound by residues 277 to 285 (LGNGQFGEV) and Lys-299. Asp-390 (proton acceptor) is an active-site residue. Tyr-420 is subject to Phosphotyrosine; by autocatalysis. Tyr-531 carries the phosphotyrosine modification.

This sequence belongs to the protein kinase superfamily. Tyr protein kinase family. SRC subfamily. It depends on Mn(2+) as a cofactor. Widely expressed.

It localises to the cytoplasm. The protein resides in the nucleus. The catalysed reaction is L-tyrosyl-[protein] + ATP = O-phospho-L-tyrosyl-[protein] + ADP + H(+). Its activity is regulated as follows. Inhibited by phosphorylation of Tyr-531 by leukocyte common antigen and activated by dephosphorylation of this site. Relatively inactive in the unfertilized oocyte, undergoes rapid activation immediately following fertilization. Total activity increases progressively during later development and remains elevated during sphere and epiboly stage. Functionally, tyrosine-protein kinase implicated in the control of cell growth. Plays a role in the regulation of intracellular calcium levels. Required in brain development and mature brain function with important roles in the regulation of axon growth, axon guidance, and neurite extension. Role in cntn1-mediated signaling. Required for convergent extension cell movements during gastrulation, acting with yes via rhoa. May be required for epiboly to occur, possibly through its effects in calcium signaling. This Danio rerio (Zebrafish) protein is Tyrosine-protein kinase fyna (fyna).